Reading from the N-terminus, the 776-residue chain is Probable E3 ubiquitin-protein ligase HECTD2 (776 aa).

Positions 1–46 (MSEAVRVPSPATPLVVAAAAPEERKGKESEREKLPPIVSAGAGATA) are disordered. Residues 7-20 (VPSPATPLVVAAAA) are compositionally biased toward low complexity. At Ser-9 the chain carries Phosphoserine. Over residues 21–34 (PEERKGKESEREKL) the composition is skewed to basic and acidic residues. The region spanning 437 to 776 (KRADLKKKLK…ISNSEGFGLE (340 aa)) is the HECT domain. The Glycyl thioester intermediate role is filled by Cys-744.

It carries out the reaction S-ubiquitinyl-[E2 ubiquitin-conjugating enzyme]-L-cysteine + [acceptor protein]-L-lysine = [E2 ubiquitin-conjugating enzyme]-L-cysteine + N(6)-ubiquitinyl-[acceptor protein]-L-lysine.. It functions in the pathway protein modification; protein ubiquitination. In terms of biological role, E3 ubiquitin-protein ligase which accepts ubiquitin from an E2 ubiquitin-conjugating enzyme in the form of a thioester and then directly transfers the ubiquitin to targeted substrates. The protein is Probable E3 ubiquitin-protein ligase HECTD2 (HECTD2) of Pongo abelii (Sumatran orangutan).